The primary structure comprises 387 residues: Phosphoglycerate kinase (387 aa).

Substrate-binding positions include 21–23 (DLN), R36, 59–62 (HLGR), R113, and R146. ATP-binding positions include K197, E314, and 340-343 (GGDT).

Belongs to the phosphoglycerate kinase family. In terms of assembly, monomer.

Its subcellular location is the cytoplasm. The enzyme catalyses (2R)-3-phosphoglycerate + ATP = (2R)-3-phospho-glyceroyl phosphate + ADP. Its pathway is carbohydrate degradation; glycolysis; pyruvate from D-glyceraldehyde 3-phosphate: step 2/5. The polypeptide is Phosphoglycerate kinase (Pseudomonas syringae pv. tomato (strain ATCC BAA-871 / DC3000)).